A 282-amino-acid polypeptide reads, in one-letter code: Biotin synthase (282 aa).

The Radical SAM core domain maps to 1 to 228 (MQEIFLCSIS…NARLMAAGGR (228 aa)). [4Fe-4S] cluster-binding residues include Cys-17, Cys-21, and Cys-24. Cys-61, Cys-96, Cys-154, and Arg-221 together coordinate [2Fe-2S] cluster.

Belongs to the radical SAM superfamily. Biotin synthase family. Homodimer. The cofactor is [4Fe-4S] cluster. [2Fe-2S] cluster is required as a cofactor.

It catalyses the reaction (4R,5S)-dethiobiotin + (sulfur carrier)-SH + 2 reduced [2Fe-2S]-[ferredoxin] + 2 S-adenosyl-L-methionine = (sulfur carrier)-H + biotin + 2 5'-deoxyadenosine + 2 L-methionine + 2 oxidized [2Fe-2S]-[ferredoxin]. It functions in the pathway cofactor biosynthesis; biotin biosynthesis; biotin from 7,8-diaminononanoate: step 2/2. Its function is as follows. Catalyzes the conversion of dethiobiotin (DTB) to biotin by the insertion of a sulfur atom into dethiobiotin via a radical-based mechanism. In Helicobacter acinonychis (strain Sheeba), this protein is Biotin synthase.